The primary structure comprises 391 residues: Polyketide synthase 5 (391 aa).

Cysteine 164 is a catalytic residue.

It belongs to the thiolase-like superfamily. Chalcone/stilbene synthases family. In terms of assembly, homodimer. Expressed in fruits.

It carries out the reaction (E)-4-coumaroyl-CoA + 3 malonyl-CoA + 3 H(+) = 2',4,4',6'-tetrahydroxychalcone + 3 CO2 + 4 CoA. It participates in secondary metabolite biosynthesis; flavonoid biosynthesis. Polyketide synthase producing naringenin chalcone. Can use p-coumaryl-CoA as substrate. The chain is Polyketide synthase 5 (PKS5) from Rubus idaeus (Raspberry).